Reading from the N-terminus, the 443-residue chain is Glutamate--tRNA ligase 2 (443 aa).

The short motif at 7 to 17 (PSPTGLIHVGN) is the 'HIGH' region element. The short motif at 240–244 (KLSKR) is the 'KMSKS' region element. Lys243 contacts ATP.

The protein belongs to the class-I aminoacyl-tRNA synthetase family. Glutamate--tRNA ligase type 1 subfamily. As to quaternary structure, monomer.

The protein localises to the cytoplasm. It catalyses the reaction tRNA(Glu) + L-glutamate + ATP = L-glutamyl-tRNA(Glu) + AMP + diphosphate. Functionally, catalyzes the attachment of glutamate to tRNA(Glu) in a two-step reaction: glutamate is first activated by ATP to form Glu-AMP and then transferred to the acceptor end of tRNA(Glu). In Gluconacetobacter diazotrophicus (strain ATCC 49037 / DSM 5601 / CCUG 37298 / CIP 103539 / LMG 7603 / PAl5), this protein is Glutamate--tRNA ligase 2.